Consider the following 122-residue polypeptide: Large ribosomal subunit protein bL12 (122 aa).

This sequence belongs to the bacterial ribosomal protein bL12 family. Homodimer. Part of the ribosomal stalk of the 50S ribosomal subunit. Forms a multimeric L10(L12)X complex, where L10 forms an elongated spine to which 2 to 4 L12 dimers bind in a sequential fashion. Binds GTP-bound translation factors.

Its function is as follows. Forms part of the ribosomal stalk which helps the ribosome interact with GTP-bound translation factors. Is thus essential for accurate translation. The chain is Large ribosomal subunit protein bL12 from Myxococcus xanthus (strain DK1622).